A 199-amino-acid polypeptide reads, in one-letter code: Stress response protein SCP2 (199 aa).

The protein belongs to the CAPAB/TerDEXZ family.

Its subcellular location is the cytoplasm. This is Stress response protein SCP2 (yceC) from Bacillus subtilis (strain 168).